Consider the following 419-residue polypeptide: L-rhamnose isomerase (419 aa).

Positions 262, 294, and 296 each coordinate Mn(2+).

This sequence belongs to the rhamnose isomerase family. In terms of assembly, homotetramer. Mn(2+) is required as a cofactor.

It is found in the cytoplasm. It carries out the reaction L-rhamnopyranose = L-rhamnulose. It participates in carbohydrate degradation; L-rhamnose degradation; glycerone phosphate from L-rhamnose: step 1/3. Functionally, catalyzes the interconversion of L-rhamnose and L-rhamnulose. This Salmonella newport (strain SL254) protein is L-rhamnose isomerase.